A 262-amino-acid polypeptide reads, in one-letter code: Ribosomal RNA small subunit methyltransferase A (262 aa).

The S-adenosyl-L-methionine site is built by His-11, Ile-13, Gly-38, Glu-60, Asp-85, and Asn-105.

Belongs to the class I-like SAM-binding methyltransferase superfamily. rRNA adenine N(6)-methyltransferase family. RsmA subfamily.

It localises to the cytoplasm. It catalyses the reaction adenosine(1518)/adenosine(1519) in 16S rRNA + 4 S-adenosyl-L-methionine = N(6)-dimethyladenosine(1518)/N(6)-dimethyladenosine(1519) in 16S rRNA + 4 S-adenosyl-L-homocysteine + 4 H(+). Specifically dimethylates two adjacent adenosines (A1518 and A1519) in the loop of a conserved hairpin near the 3'-end of 16S rRNA in the 30S particle. May play a critical role in biogenesis of 30S subunits. The polypeptide is Ribosomal RNA small subunit methyltransferase A (Neorickettsia sennetsu (strain ATCC VR-367 / Miyayama) (Ehrlichia sennetsu)).